A 327-amino-acid polypeptide reads, in one-letter code: uncharacterized protein (327 aa).

Residues 1–19 (MSIAQDRGIVFKLLSIYRA) are Cytoplasmic-facing. Residues 20–40 (AAGIFMALAQLIVIFFGYCDF) form a helical membrane-spanning segment. Residues 41–51 (KIKGYRIASYN) are Extracellular-facing. A helical membrane pass occupies residues 52 to 72 (APTFASSFIILAVCLLLVVVL). At 73–104 (ENPEVKVTNSENSLFSALKQFFRVERKKLISC) the chain is on the cytoplasmic side. Residues 105–125 (LILLWSMFLSSFIMSEVVYFM) form a helical membrane-spanning segment. The Extracellular portion of the chain corresponds to 126–141 (PLFLTLHVNWDTKFQG). Residues 142–162 (IAFMVASILGVTGSYFAPKLI) form a helical membrane-spanning segment. Residues 163–199 (NVGCSCGRAKDGGLEESDTTGSETVEVKKKDSLYSGQ) are Cytoplasmic-facing. The helical transmembrane segment at 200–220 (VFLSIFALFVSLLGQAFMIGA) threads the bilayer. At 221-235 (SEALKHKSMPPTNSG) the chain is on the extracellular side. A helical membrane pass occupies residues 236-256 (IFFSAGMSITLLGYNFLASSI). Over 257–275 (PALFSMYIDPKLKVQLMPS) the chain is Cytoplasmic. The chain crosses the membrane as a helical span at residues 276 to 296 (IGAISGIGKLVAPIVLAALYG). At 297–300 (TRLG) the chain is on the extracellular side. The chain crosses the membrane as a helical span at residues 301 to 321 (LSIAVGFGMILVAVSIPPLIW). The Cytoplasmic portion of the chain corresponds to 322–327 (LRKKRC).

Its subcellular location is the membrane. This is an uncharacterized protein from Saccharomyces cerevisiae (strain ATCC 204508 / S288c) (Baker's yeast).